Reading from the N-terminus, the 260-residue chain is MVKGKSKKVVTSTIQEENVSKEPLAPIVPIVPDILRNEEELVFIEIEKRDKNEIVNVPITQTNPVVQTNNKTNNKNNINNNNNNNNNNNNNNINNNNKNNKVKKTTTTTKKNNEKSNEKQKSVKFANKINESRSARADLTFPVSRIEKMIREGRFTKRCSSDAPVFLAAVLEYLTLEILELSITYANQKNKTRITPQHIHLSICCDAELNDLLKNVTIANGGVPKFIHPILLDTPKKKGHQQNMNENDISKEKDIKSSKN.

Disordered stretches follow at residues 65–122 and 236–260; these read VVQT…KQKS and KKKG…SSKN. Over residues 67–110 the composition is skewed to low complexity; that stretch reads QTNNKTNNKNNINNNNNNNNNNNNNNINNNNKNNKVKKTTTTTK. Composition is skewed to basic and acidic residues over residues 111 to 121 and 248 to 260; these read KNNEKSNEKQK and DISK…SSKN.

It belongs to the histone H2A family.

The sequence is that of Histone H2A.v1 (H2Av1) from Dictyostelium discoideum (Social amoeba).